A 440-amino-acid chain; its full sequence is Phosphatidylcholine-sterol acyltransferase (440 aa).

The N-terminal stretch at 1–24 (MGPPGSPWQWVPLLLGLLLPPAAP) is a signal peptide. A glycan (N-linked (GlcNAc...) asparagine) is linked at asparagine 44. Cysteine 74 and cysteine 98 are joined by a disulfide. N-linked (GlcNAc...) asparagine glycosylation is present at asparagine 108. Residue serine 205 is the Nucleophile of the active site. Asparagine 296 carries N-linked (GlcNAc...) asparagine glycosylation. Cysteines 337 and 380 form a disulfide. Catalysis depends on charge relay system residues aspartate 369 and histidine 401. Asparagine 408 carries an N-linked (GlcNAc...) asparagine glycan.

This sequence belongs to the AB hydrolase superfamily. Lipase family. Most abundant in liver and cerebellum.

The protein localises to the secreted. It carries out the reaction a sterol + a 1,2-diacyl-sn-glycero-3-phosphocholine = a sterol ester + a 1-acyl-sn-glycero-3-phosphocholine. APOA1 is the most potent activator in plasma. Also activated by APOE, APOC1 and APOA4. Functionally, central enzyme in the extracellular metabolism of plasma lipoproteins. Synthesized mainly in the liver and secreted into plasma where it converts cholesterol and phosphatidylcholines (lecithins) to cholesteryl esters and lysophosphatidylcholines on the surface of high and low density lipoproteins (HDLs and LDLs). The cholesterol ester is then transported back to the liver. Has a preference for plasma 16:0-18:2 or 18:O-18:2 phosphatidylcholines. Also produced in the brain by primary astrocytes, and esterifies free cholesterol on nascent APOE-containing lipoproteins secreted from glia and influences cerebral spinal fluid (CSF) APOE- and APOA1 levels. Together with APOE and the cholesterol transporter ABCA1, plays a key role in the maturation of glial-derived, nascent lipoproteins. Required for remodeling high-density lipoprotein particles into their spherical forms. The polypeptide is Phosphatidylcholine-sterol acyltransferase (LCAT) (Papio anubis (Olive baboon)).